A 246-amino-acid polypeptide reads, in one-letter code: Orotidine 5'-phosphate decarboxylase (246 aa).

Substrate contacts are provided by residues aspartate 22, lysine 44, 71–80 (DLKFHDIPNT), threonine 131, arginine 192, glutamine 201, glycine 221, and arginine 222. The active-site Proton donor is the lysine 73.

It belongs to the OMP decarboxylase family. Type 1 subfamily. As to quaternary structure, homodimer.

It catalyses the reaction orotidine 5'-phosphate + H(+) = UMP + CO2. The protein operates within pyrimidine metabolism; UMP biosynthesis via de novo pathway; UMP from orotate: step 2/2. Functionally, catalyzes the decarboxylation of orotidine 5'-monophosphate (OMP) to uridine 5'-monophosphate (UMP). The protein is Orotidine 5'-phosphate decarboxylase of Yersinia enterocolitica serotype O:8 / biotype 1B (strain NCTC 13174 / 8081).